A 469-amino-acid chain; its full sequence is uncharacterized protein (469 aa).

An N-terminal signal peptide occupies residues M1–G19. Transmembrane regions (helical) follow at residues I199–L219, A236–I256, A283–V303, Y305–L325, I338–A358, I386–L406, and G413–F433.

The protein localises to the membrane. This is an uncharacterized protein from Schizosaccharomyces pombe (strain 972 / ATCC 24843) (Fission yeast).